The chain runs to 213 residues: Uridine kinase (213 aa).

Residue 14-21 (GASASGKS) participates in ATP binding.

Belongs to the uridine kinase family.

The protein resides in the cytoplasm. It catalyses the reaction uridine + ATP = UMP + ADP + H(+). The catalysed reaction is cytidine + ATP = CMP + ADP + H(+). It participates in pyrimidine metabolism; CTP biosynthesis via salvage pathway; CTP from cytidine: step 1/3. It functions in the pathway pyrimidine metabolism; UMP biosynthesis via salvage pathway; UMP from uridine: step 1/1. The chain is Uridine kinase from Vibrio cholerae serotype O1 (strain ATCC 39315 / El Tor Inaba N16961).